An 809-amino-acid polypeptide reads, in one-letter code: BTB/POZ domain-containing protein At2g30600 (809 aa).

BTB domains follow at residues 211-273 and 351-420; these read SDTV…QILE and SDIK…NMED. In terms of domain architecture, BACK spans 466–537; the sequence is VVSSISSCKL…LMWCMKAEES (72 aa).

Its pathway is protein modification; protein ubiquitination. Functionally, may act as a substrate-specific adapter of an E3 ubiquitin-protein ligase complex (CUL3-RBX1-BTB) which mediates the ubiquitination and subsequent proteasomal degradation of target proteins. The sequence is that of BTB/POZ domain-containing protein At2g30600 from Arabidopsis thaliana (Mouse-ear cress).